Consider the following 530-residue polypeptide: Bifunctional purine biosynthesis protein PurH (530 aa).

An MGS-like domain is found at 1–149 (MASDFLPVHR…KNFARVAVAT (149 aa)).

The protein belongs to the PurH family.

It catalyses the reaction (6R)-10-formyltetrahydrofolate + 5-amino-1-(5-phospho-beta-D-ribosyl)imidazole-4-carboxamide = 5-formamido-1-(5-phospho-D-ribosyl)imidazole-4-carboxamide + (6S)-5,6,7,8-tetrahydrofolate. The catalysed reaction is IMP + H2O = 5-formamido-1-(5-phospho-D-ribosyl)imidazole-4-carboxamide. The protein operates within purine metabolism; IMP biosynthesis via de novo pathway; 5-formamido-1-(5-phospho-D-ribosyl)imidazole-4-carboxamide from 5-amino-1-(5-phospho-D-ribosyl)imidazole-4-carboxamide (10-formyl THF route): step 1/1. Its pathway is purine metabolism; IMP biosynthesis via de novo pathway; IMP from 5-formamido-1-(5-phospho-D-ribosyl)imidazole-4-carboxamide: step 1/1. This is Bifunctional purine biosynthesis protein PurH from Xylella fastidiosa (strain M12).